Reading from the N-terminus, the 259-residue chain is UBX domain-containing protein 2A (259 aa).

A required for interaction with CHRNA3 region spans residues 1–151 (MKDVDNLKSI…SATPKIVSKA (151 aa)). Residues 1-164 (MKDVDNLKSI…EVENKNNLSA (164 aa)) form a required for inhibition of CHRNA3 ubiquitination and translocation of CHRNA3 to the plasma membrane resulting in an increase in acetylcholine-gated nicotinic acetylcholine receptor currents region. An SEP domain is found at 60 to 124 (QVDVNIKLWK…VEDKKNEICL (65 aa)). The segment at 167–259 (LNNLEPITNI…TASFRELSEH (93 aa)) is required for interaction with VCP. The UBX domain occupies 169-246 (NLEPITNIQI…DLQNAVIIQR (78 aa)).

Part of a complex composed of STUB1/CHIP, VCP/p97, CHRNA3, and UBXN2A that modulates the ubiquitination and endoplasmic reticulum-associated degradation (ERAD) of CHRNA3. Within the complex UBXN2A acts as a scaffold protein required for the interaction of CHRNA3 with VCP/p97, this interaction also inhibits CHRNA3 ubiquitination by STUB1/CHIP and subsequently ERAD. Interacts (via SEP domain) with CHRNA3 and interacts (via UBX domain) with VCP/P97; these interactions are required for the interaction of CHRNA3 with the STUB1-VCP-UBXN2A complex. Interacts with HSPA9/MOT-2 (via SBD domain); the interaction inhibits HSPA9/MOT-2 interaction with and degradation of p53, thereby promotes p53 translocation to the nucleus. Interacts with RICTOR. In terms of processing, ubiquitinated. Expressed in the colon (at protein level).

It is found in the golgi apparatus. The protein localises to the endoplasmic reticulum. Its subcellular location is the perikaryon. The protein resides in the cell projection. It localises to the dendrite. It is found in the nucleus. The protein localises to the cytoplasm. Acts to repress the ubiquitination and subsequent endoplasmic reticulum-associated degradation of CHRNA3 by the STUB1-VCP-UBXN2A complex in cortical neurons. Also acts to promote the translocation of CHRNA3 to the plasma membrane and subsequently increases plasma membrane acetylcholine-gated ion-channel activation. Plays a role in the inhibition of STUB1-mediated TP53 degradation, via its interaction with HSPA9 which acts to inhibit TP53 binding to HSPA9. Positively mediates the ubiquitination and proteosomal degradation of RICTOR, may thereby act as a negative regulator of the mTORC2 pathway. This chain is UBX domain-containing protein 2A, found in Homo sapiens (Human).